A 120-amino-acid chain; its full sequence is Flagellar protein FliT (120 aa).

The tract at residues methionine 1–asparagine 50 is required for homodimerization. Positions leucine 59 to lysine 97 are fliD binding.

The protein belongs to the FliT family. In terms of assembly, homodimer. Interacts with FliD and FlhC.

Its subcellular location is the cytoplasm. It is found in the cytosol. In terms of biological role, dual-function protein that regulates the transcription of class 2 flagellar operons and that also acts as an export chaperone for the filament-capping protein FliD. As a transcriptional regulator, acts as an anti-FlhDC factor; it directly binds FlhC, thus inhibiting the binding of the FlhC/FlhD complex to class 2 promoters, resulting in decreased expression of class 2 flagellar operons. As a chaperone, effects FliD transition to the membrane by preventing its premature polymerization, and by directing it to the export apparatus. The polypeptide is Flagellar protein FliT (Citrobacter koseri (strain ATCC BAA-895 / CDC 4225-83 / SGSC4696)).